Reading from the N-terminus, the 876-residue chain is GRB2-associated and regulator of MAPK protein (876 aa).

A CABIT region spans residues 9-318; sequence KDVKWSSASF…NLIKGEVWQD (310 aa). At Tyr451 the chain carries Phosphotyrosine. Disordered stretches follow at residues 460 to 569 and 708 to 741; these read SVKR…TLSY and DRML…LSEP. A compositionally biased stretch (polar residues) spans 461–471; it reads VKRSGQPLTRS. Positions 532–549 are enriched in pro residues; the sequence is PPVPPRSSKPSSPTPSVP. The segment covering 556 to 569 has biased composition (polar residues); the sequence is VRQQTRSPSPTLSY. The SAM domain maps to 811–876; it reads LSVEEVSKSL…QFINGWRPKM (66 aa).

The protein belongs to the GAREM family.

Its function is as follows. Adapter protein that may provide a link between cell surface epidermal growth factor receptor and the MAPK/ERK signaling pathway. May promote cell proliferation. This chain is GRB2-associated and regulator of MAPK protein (garem1), found in Xenopus laevis (African clawed frog).